The following is a 147-amino-acid chain: Cyclic di-AMP receptor B (147 aa).

The CBS domain maps to 18-78; sequence MIEADKVAHV…SIFGLERIEF (61 aa). Positions 23, 25, 46, 47, and 131 each coordinate 3',3'-c-di-AMP.

In terms of assembly, homodimer. Forms a homodimer with a parallel, head-to-head assembly of the monomers. Under conditions of potassium starvation and corresponding low c-di-AMP levels, apo-DarB specifically interacts with the N-terminal region of the RelA. Under the same conditions, apo-DarB also specifically interacts with the C-terminal part of the pyruvate carboxylase.

With respect to regulation, binds c-di-AMP. Binding of c-di-AMP to DarB inhibits the interaction with RelA and PYC. Its function is as follows. Involved in the c-di-AMP-dependent regulation of the bacterial stringent response. Modulates the activities of at least two enzymes under conditions of potassium limitation. Apo-DarB regulates the activity of the GTP pyrophosphokinase RelA by interacting directly with RelA, leading to stimulation of (p)ppGpp synthesis and induction of the stringent response. Apo-DarB also regulates pyruvate carboxylase (PYC) at two levels: directly at the protein level by binding to the enzyme and stimulating the synthesis of oxaloacetate and indirectly, by interaction with RelA, which leads to activation of the stringent response and to the increased expression of the pycA gene. Stimulation of these enzymes by DarB is prevented in the presence of cyclic di-AMP (c-di-AMP). The protein is Cyclic di-AMP receptor B of Bacillus subtilis (strain 168).